Reading from the N-terminus, the 384-residue chain is 23S rRNA (uracil(747)-C(5))-methyltransferase RlmC (384 aa).

Residues cysteine 7, cysteine 15, cysteine 18, and cysteine 94 each coordinate [4Fe-4S] cluster. Residues glutamine 219, phenylalanine 248, glutamate 269, and asparagine 316 each coordinate S-adenosyl-L-methionine. The Nucleophile role is filled by cysteine 343.

The protein belongs to the class I-like SAM-binding methyltransferase superfamily. RNA M5U methyltransferase family. RlmC subfamily.

The catalysed reaction is uridine(747) in 23S rRNA + S-adenosyl-L-methionine = 5-methyluridine(747) in 23S rRNA + S-adenosyl-L-homocysteine + H(+). Functionally, catalyzes the formation of 5-methyl-uridine at position 747 (m5U747) in 23S rRNA. The chain is 23S rRNA (uracil(747)-C(5))-methyltransferase RlmC from Shewanella sp. (strain MR-4).